The primary structure comprises 618 residues: uncharacterized protein (618 aa).

To Rhizobium NGR234A y4qD.

This is an uncharacterized protein from Sinorhizobium fredii (strain NBRC 101917 / NGR234).